The sequence spans 250 residues: Mediator of RNA polymerase II transcription subunit 8 (250 aa).

A disordered region spans residues 217–250 (SPMSAVSPGAGPLGKMPSGIKTNIKSANQVHPYR). Residues 236 to 250 (IKTNIKSANQVHPYR) are compositionally biased toward polar residues.

The protein belongs to the Mediator complex subunit 8 family. Component of the Mediator complex.

Its subcellular location is the nucleus. In terms of biological role, component of the Mediator complex, a coactivator involved in the regulated transcription of nearly all RNA polymerase II-dependent genes. Mediator functions as a bridge to convey information from gene-specific regulatory proteins to the basal RNA polymerase II transcription machinery. Mediator is recruited to promoters by direct interactions with regulatory proteins and serves as a scaffold for the assembly of a functional preinitiation complex with RNA polymerase II and the general transcription factors. The polypeptide is Mediator of RNA polymerase II transcription subunit 8 (MED8) (Aedes aegypti (Yellowfever mosquito)).